Here is a 690-residue protein sequence, read N- to C-terminus: Translation factor GUF1, mitochondrial (690 aa).

Residues 40-68 form a disordered region; the sequence is SVTVPAARRHNSTKSTNSTTSTNSTTATS. The segment covering 52 to 68 has biased composition (low complexity); the sequence is TKSTNSTTSTNSTTATS. The tr-type G domain maps to 89 to 272; the sequence is ERYRNFCIVA…AVIKKMPAPV (184 aa). GTP is bound by residues 98 to 105, 165 to 169, and 219 to 222; these read AHIDHGKS, DTPGH, and NKID.

It belongs to the TRAFAC class translation factor GTPase superfamily. Classic translation factor GTPase family. LepA subfamily.

The protein resides in the mitochondrion inner membrane. It carries out the reaction GTP + H2O = GDP + phosphate + H(+). Promotes mitochondrial protein synthesis. May act as a fidelity factor of the translation reaction, by catalyzing a one-codon backward translocation of tRNAs on improperly translocated ribosomes. Binds to mitochondrial ribosomes in a GTP-dependent manner. The sequence is that of Translation factor GUF1, mitochondrial from Sordaria macrospora (strain ATCC MYA-333 / DSM 997 / K(L3346) / K-hell).